The primary structure comprises 252 residues: PHD finger protein ALFIN-LIKE 7 (252 aa).

The interval 141–193 (AKQSKDQSANHNSSRSKSSGGKPRHSESHTKASKMSPPPRKEDESGDEDEDDE) is disordered. Low complexity predominate over residues 149 to 161 (ANHNSSRSKSSGG). Serine 176 carries the post-translational modification Phosphoserine. Acidic residues predominate over residues 184-193 (ESGDEDEDDE). The PHD-type zinc finger occupies 195–247 (GAVCGACGDNYGGDEFWICCDACEKWFHGKCVKITPAKAEHIKHYKCPSCTTS).

This sequence belongs to the Alfin family. In terms of assembly, interacts with H3K4me3 and to a lesser extent with H3K4me2. Ubiquitously expressed.

The protein resides in the nucleus. In terms of biological role, histone-binding component that specifically recognizes H3 tails trimethylated on 'Lys-4' (H3K4me3), which mark transcription start sites of virtually all active genes. This chain is PHD finger protein ALFIN-LIKE 7 (AL7), found in Arabidopsis thaliana (Mouse-ear cress).